The primary structure comprises 107 residues: Immunoglobulin kappa constant (107 aa).

The region spanning 6-103 (PTVSIFPPSS…STSPIVKSFN (98 aa)) is the Ig-like domain. A disulfide bridge connects residues Cys-27 and Cys-87.

The chain is Immunoglobulin kappa constant from Mus musculus (Mouse).